Reading from the N-terminus, the 158-residue chain is Transcription elongation factor GreA (158 aa).

Residues 48–75 (NSEYDSAKEDQAFVEGRIAQLEKMIRNA) are a coiled coil.

Belongs to the GreA/GreB family.

Necessary for efficient RNA polymerase transcription elongation past template-encoded arresting sites. The arresting sites in DNA have the property of trapping a certain fraction of elongating RNA polymerases that pass through, resulting in locked ternary complexes. Cleavage of the nascent transcript by cleavage factors such as GreA or GreB allows the resumption of elongation from the new 3'terminus. GreA releases sequences of 2 to 3 nucleotides. This is Transcription elongation factor GreA from Shouchella clausii (strain KSM-K16) (Alkalihalobacillus clausii).